A 179-amino-acid polypeptide reads, in one-letter code: Large ribosomal subunit protein uL5 (179 aa).

Belongs to the universal ribosomal protein uL5 family. In terms of assembly, part of the 50S ribosomal subunit; part of the 5S rRNA/L5/L18/L25 subcomplex. Contacts the 5S rRNA and the P site tRNA. Forms a bridge to the 30S subunit in the 70S ribosome.

This is one of the proteins that bind and probably mediate the attachment of the 5S RNA into the large ribosomal subunit, where it forms part of the central protuberance. In the 70S ribosome it contacts protein S13 of the 30S subunit (bridge B1b), connecting the 2 subunits; this bridge is implicated in subunit movement. Contacts the P site tRNA; the 5S rRNA and some of its associated proteins might help stabilize positioning of ribosome-bound tRNAs. The sequence is that of Large ribosomal subunit protein uL5 from Bacillus cereus (strain Q1).